Here is an 84-residue protein sequence, read N- to C-terminus: Large ribosomal subunit protein bL27 (84 aa).

Positions 1-22 (MAHKKGASSTRNGRDSNAQRLG) are disordered. The span at 7 to 19 (ASSTRNGRDSNAQ) shows a compositional bias: polar residues.

The protein belongs to the bacterial ribosomal protein bL27 family.

This is Large ribosomal subunit protein bL27 from Streptomyces coelicolor (strain ATCC BAA-471 / A3(2) / M145).